Consider the following 452-residue polypeptide: MNKVNQILEEKVMPIAGRIAGQRHLQALRDGIILTMPLIIIGSFFLIIGNLPIPGYAEFMAKTFGSSWSEKLAYPVDATFEIMGLVAAFGIAYRLAEKYGVDALSAGAISLAAFLLATPYQVPFMPDGATKEIMVGGGIPLSLMGSKGLFVAMIIAMVSTEIYRLIIQRNLVFKMPDGVPPAVSKSFVALIPGFAVIFLIWAARLIVEATPFESLHNIVSVLLGTPLSILGGSLGGSLVAEAVKMLLWACGLHGANIVGGVMAPIWYGAMDANRIAFQAGEELPKIFTQQFFDIWVNIGGSGATLALVVTMFLRARSKQMKQLGKLAVGPAIFNINEPIIFGMPIVMNPMLLLPFIITPLVTVTLTYIGMSTGLVAKPAGIAVPWTMPPIFSGYLATGGKVSGAVMQAINIAVSFVVYYPFFRMWDKQKLKEENDLELVQTPAATDDKEAAL.

One can recognise a PTS EIIC type-3 domain in the interval 8 to 421; that stretch reads LEEKVMPIAG…AVSFVVYYPF (414 aa). 10 helical membrane-spanning segments follow: residues 31–51, 72–92, 104–124, 138–158, 187–207, 218–238, 246–266, 291–311, 351–373, and 402–422; these read GIILTMPLIIIGSFFLIIGNL, LAYPVDATFEIMGLVAAFGIA, LSAGAISLAAFLLATPYQVPF, GIPLSLMGSKGLFVAMIIAMV, FVALIPGFAVIFLIWAARLIV, IVSVLLGTPLSILGGSLGGSL, LLWACGLHGANIVGGVMAPIW, FFDIWVNIGGSGATLALVVTM, LLLPFIITPLVTVTLTYIGMSTG, and SGAVMQAINIAVSFVVYYPFF.

Its subcellular location is the cell membrane. Functionally, the phosphoenolpyruvate-dependent sugar phosphotransferase system (PTS), a major carbohydrate active -transport system, catalyzes the phosphorylation of incoming sugar substrates concomitant with their translocation across the cell membrane. This system is involved in lichenan transport. In Bacillus subtilis (strain 168), this protein is Lichenan permease IIC component (licC).